The primary structure comprises 586 residues: Potassium-transporting ATPase potassium-binding subunit (586 aa).

A run of 12 helical transmembrane segments spans residues 11–31 (LFLV…AKVF), 67–87 (AVAV…ILML), 136–156 (GLAV…IAVI), 179–199 (LYVL…QGVI), 279–299 (VEIF…GVMV), 306–326 (WAIL…LQGV), 351–371 (FGLA…CGAV), 381–401 (LGGM…GGVG), 403–423 (GLYT…LMIG), 442–462 (IITV…AMIT), 507–527 (ILGS…VLAM), and 551–571 (FALW…FPAL).

It belongs to the KdpA family. As to quaternary structure, the system is composed of three essential subunits: KdpA, KdpB and KdpC.

It is found in the cell inner membrane. Functionally, part of the high-affinity ATP-driven potassium transport (or Kdp) system, which catalyzes the hydrolysis of ATP coupled with the electrogenic transport of potassium into the cytoplasm. This subunit binds the periplasmic potassium ions and delivers the ions to the membrane domain of KdpB through an intramembrane tunnel. The chain is Potassium-transporting ATPase potassium-binding subunit from Geobacter metallireducens (strain ATCC 53774 / DSM 7210 / GS-15).